The sequence spans 296 residues: Nucleotide-binding protein Rmet_0297 (296 aa).

8–15 (GISGSGKS) contributes to the ATP binding site. Position 57 to 60 (57 to 60 (DIRS)) interacts with GTP.

This sequence belongs to the RapZ-like family.

Its function is as follows. Displays ATPase and GTPase activities. The sequence is that of Nucleotide-binding protein Rmet_0297 from Cupriavidus metallidurans (strain ATCC 43123 / DSM 2839 / NBRC 102507 / CH34) (Ralstonia metallidurans).